The primary structure comprises 372 residues: Alanine racemase (372 aa).

The active-site Proton acceptor; specific for D-alanine is the Lys-36. The residue at position 36 (Lys-36) is an N6-(pyridoxal phosphate)lysine. Position 134 (Arg-134) interacts with substrate. The active-site Proton acceptor; specific for L-alanine is the Tyr-266. Substrate is bound at residue Met-314.

This sequence belongs to the alanine racemase family. Pyridoxal 5'-phosphate serves as cofactor.

The catalysed reaction is L-alanine = D-alanine. It participates in amino-acid biosynthesis; D-alanine biosynthesis; D-alanine from L-alanine: step 1/1. Its function is as follows. Catalyzes the interconversion of L-alanine and D-alanine. May also act on other amino acids. In Nitratidesulfovibrio vulgaris (strain DSM 19637 / Miyazaki F) (Desulfovibrio vulgaris), this protein is Alanine racemase (alr).